The following is a 346-amino-acid chain: GTPase Obg (346 aa).

Residues 1-159 (MKFLDEAKVY…RWIWLRLKLI (159 aa)) form the Obg domain. The OBG-type G domain maps to 160 to 327 (ADAGLVGLPN…ALRALVAVIG (168 aa)). GTP is bound by residues 166 to 173 (GLPNAGKS), 191 to 195 (FTTLH), 212 to 215 (DIPG), 279 to 282 (NKID), and 308 to 310 (SAA). 2 residues coordinate Mg(2+): serine 173 and threonine 193.

It belongs to the TRAFAC class OBG-HflX-like GTPase superfamily. OBG GTPase family. In terms of assembly, monomer. Mg(2+) serves as cofactor.

The protein localises to the cytoplasm. Functionally, an essential GTPase which binds GTP, GDP and possibly (p)ppGpp with moderate affinity, with high nucleotide exchange rates and a fairly low GTP hydrolysis rate. Plays a role in control of the cell cycle, stress response, ribosome biogenesis and in those bacteria that undergo differentiation, in morphogenesis control. This chain is GTPase Obg, found in Bradyrhizobium diazoefficiens (strain JCM 10833 / BCRC 13528 / IAM 13628 / NBRC 14792 / USDA 110).